Consider the following 590-residue polypeptide: Rho GTPase-activating protein 36 (590 aa).

One can recognise a Rho-GAP domain in the interval 214–414 (MSLNPIAQQI…AMIDNWDILF (201 aa)). Positions 526–590 (IPNNEDTDSD…KGKFATRFFP (65 aa)) are disordered.

In terms of assembly, may interacts (via the Rho-GAP domain) with the active form of RAC1.

GTPase activator for the Rho-type GTPases by converting them to an inactive GDP-bound state. This is Rho GTPase-activating protein 36 (Arhgap36) from Mus musculus (Mouse).